The primary structure comprises 616 residues: Homeodomain-interacting protein kinase 4 (616 aa).

Residues 11–347 (YDIIEVLGKG…PSAALRHPFV (337 aa)) enclose the Protein kinase domain. Residues 17–25 (LGKGTFGEV) and Lys-40 each bind ATP. Asp-136 functions as the Proton acceptor in the catalytic mechanism. A disordered region spans residues 485-616 (RHKARKPPAG…SFLQHVTGHH (132 aa)). Residues 496–511 (KSDSNLSNLIRLSQVS) are compositionally biased toward polar residues. Phosphoserine is present on Ser-511.

It belongs to the protein kinase superfamily. CMGC Ser/Thr protein kinase family. HIPK subfamily. Post-translationally, autophosphorylated.

It is found in the cytoplasm. The enzyme catalyses L-seryl-[protein] + ATP = O-phospho-L-seryl-[protein] + ADP + H(+). It catalyses the reaction L-threonyl-[protein] + ATP = O-phospho-L-threonyl-[protein] + ADP + H(+). Its function is as follows. Protein kinase that phosphorylates TP53, and thus induces TP53 repression of BIRC5 promoter. May act as a corepressor of transcription factors (Potential). In Macaca fascicularis (Crab-eating macaque), this protein is Homeodomain-interacting protein kinase 4 (HIPK4).